A 119-amino-acid chain; its full sequence is Large ribosomal subunit protein bL20 (119 aa).

The protein belongs to the bacterial ribosomal protein bL20 family.

In terms of biological role, binds directly to 23S ribosomal RNA and is necessary for the in vitro assembly process of the 50S ribosomal subunit. It is not involved in the protein synthesizing functions of that subunit. The sequence is that of Large ribosomal subunit protein bL20 from Clostridium acetobutylicum (strain ATCC 824 / DSM 792 / JCM 1419 / IAM 19013 / LMG 5710 / NBRC 13948 / NRRL B-527 / VKM B-1787 / 2291 / W).